The following is a 38-amino-acid chain: MKVRCFCVVLLVSGTLCLHADRSYPGNSVPVTLNVQSR.

Residues 1-20 are membrane-embedded; that stretch reads MKVRCFCVVLLVSGTLCLHA.

This sequence belongs to the TimP toxin family.

The protein resides in the cell inner membrane. In terms of biological role, toxic component of a probable type I toxin-antitoxin (TA) system. Neutralized by sRNA antitoxin TimR which binds to the 5' UTR of timP mRNA and inhibits translation. When TimP is expressed from its promoter in the absence of antitoxin leads to mild cell stress; overexpression in situ is toxic to the cell and causes membrane leakage. The antitoxin gene is encoded immediately upstream and transcribed divergently from the toxin gene; antitoxin RNA is less stable than timP mRNA. The protein is Toxic protein TimP of Salmonella typhimurium (strain SL1344).